We begin with the raw amino-acid sequence, 75 residues long: Tautomerase PptA (75 aa).

P2 functions as the Proton acceptor; via imino nitrogen in the catalytic mechanism.

It belongs to the 4-oxalocrotonate tautomerase family. PptA subfamily. Homodimer.

The protein resides in the cytoplasm. The chain is Tautomerase PptA from Klebsiella pneumoniae subsp. pneumoniae (strain ATCC 700721 / MGH 78578).